Consider the following 199-residue polypeptide: MAKVLVLYYSTYGHIEQMAHAVAEGAREAGAEVDVKRVPELVPEDVARKSHFKLDQSAPLARVDELPNYDAIIFGTPTRYGNMASQMKNFLDQTGGLWMKGALVGKVGSVFTSSASQHGGQESTILSFHTVLLHHGMVLVGLPYAFQGQLGVSQVMGNSPYGASTIADGDGSRQPSPIELDGARYQGRHVAGIAAKLAG.

The Flavodoxin-like domain occupies 4–190 (VLVLYYSTYG…DGARYQGRHV (187 aa)). FMN-binding positions include 10 to 15 (STYGHI) and 78 to 80 (TRY). Tyr12 contributes to the NAD(+) binding site. Residue Trp98 participates in substrate binding. FMN contacts are provided by residues 113 to 119 (SSASQHG) and His134.

Belongs to the WrbA family. It depends on FMN as a cofactor.

It carries out the reaction a quinone + NADH + H(+) = a quinol + NAD(+). The catalysed reaction is a quinone + NADPH + H(+) = a quinol + NADP(+). This is NAD(P)H dehydrogenase (quinone) from Methylobacterium sp. (strain 4-46).